The primary structure comprises 598 residues: NADH-quinone oxidoreductase subunit C/D (598 aa).

Residues 1-189 (MTDLTTSDSL…DPYVLTKQKE (189 aa)) are NADH dehydrogenase I subunit C. The NADH dehydrogenase I subunit D stretch occupies residues 213–598 (DFMFLNLGPN…IDFVMSDVDR (386 aa)).

In the N-terminal section; belongs to the complex I 30 kDa subunit family. The protein in the C-terminal section; belongs to the complex I 49 kDa subunit family. As to quaternary structure, NDH-1 is composed of 13 different subunits. Subunits NuoB, CD, E, F, and G constitute the peripheral sector of the complex.

Its subcellular location is the cell inner membrane. It carries out the reaction a quinone + NADH + 5 H(+)(in) = a quinol + NAD(+) + 4 H(+)(out). Functionally, NDH-1 shuttles electrons from NADH, via FMN and iron-sulfur (Fe-S) centers, to quinones in the respiratory chain. The immediate electron acceptor for the enzyme in this species is believed to be ubiquinone. Couples the redox reaction to proton translocation (for every two electrons transferred, four hydrogen ions are translocated across the cytoplasmic membrane), and thus conserves the redox energy in a proton gradient. This is NADH-quinone oxidoreductase subunit C/D from Yersinia pestis bv. Antiqua (strain Angola).